Here is a 115-residue protein sequence, read N- to C-terminus: Probable malate:quinone oxidoreductase (115 aa).

Residues 88–115 are disordered; it reads QMPAAAPTATAKPAETPREASPQHDMAL. Over residues 90–101 the composition is skewed to low complexity; that stretch reads PAAAPTATAKPA. The segment covering 102-115 has biased composition (basic and acidic residues); that stretch reads ETPREASPQHDMAL.

Belongs to the MQO family. The cofactor is FAD.

It catalyses the reaction (S)-malate + a quinone = a quinol + oxaloacetate. It functions in the pathway carbohydrate metabolism; tricarboxylic acid cycle; oxaloacetate from (S)-malate (quinone route): step 1/1. The polypeptide is Probable malate:quinone oxidoreductase (mqo) (Klebsiella pneumoniae).